We begin with the raw amino-acid sequence, 183 residues long: Ribosome maturation factor RimM (183 aa).

The 80-residue stretch at 104-183 (EGDYYWKDLM…TIEVDWDPGF (80 aa)) folds into the PRC barrel domain.

It belongs to the RimM family. Binds ribosomal protein uS19.

The protein resides in the cytoplasm. Its function is as follows. An accessory protein needed during the final step in the assembly of 30S ribosomal subunit, possibly for assembly of the head region. Essential for efficient processing of 16S rRNA. May be needed both before and after RbfA during the maturation of 16S rRNA. It has affinity for free ribosomal 30S subunits but not for 70S ribosomes. The polypeptide is Ribosome maturation factor RimM (Salmonella choleraesuis (strain SC-B67)).